We begin with the raw amino-acid sequence, 292 residues long: Poly(U)-specific endoribonuclease-A (292 aa).

An EndoU domain is found at 8 to 285; that stretch reads LNHELSKLFN…IGTAYPVLLS (278 aa). Active-site residues include His-162, His-178, and Lys-224.

Belongs to the ENDOU family. Monomer. The cofactor is Mn(2+).

It localises to the nucleus. The catalysed reaction is uridylyl-uridylyl-ribonucleotide-RNA = a 3'-end uridylyl-2',3'-cyclophospho-uridine-RNA + a 5'-end dephospho-ribonucleoside-RNA. Functionally, poly(U)-specific endoribonuclease involved in the processing of intron-encoded box C/D snoRNAs, such as U16 and U86. Releases products that have 2',3'-cyclic phosphate termini at the 3'-end. In Xenopus laevis (African clawed frog), this protein is Poly(U)-specific endoribonuclease-A (endou-a).